The chain runs to 238 residues: Orotidine 5'-phosphate decarboxylase (238 aa).

Substrate contacts are provided by residues D10, K32, 59 to 68 (DLKLHDIPNT), T122, R184, Q193, G213, and R214. K61 functions as the Proton donor in the catalytic mechanism.

The protein belongs to the OMP decarboxylase family. Type 1 subfamily. As to quaternary structure, homodimer.

The enzyme catalyses orotidine 5'-phosphate + H(+) = UMP + CO2. The protein operates within pyrimidine metabolism; UMP biosynthesis via de novo pathway; UMP from orotate: step 2/2. Its function is as follows. Catalyzes the decarboxylation of orotidine 5'-monophosphate (OMP) to uridine 5'-monophosphate (UMP). This chain is Orotidine 5'-phosphate decarboxylase, found in Bacillus cereus (strain Q1).